We begin with the raw amino-acid sequence, 183 residues long: Negative modulator of initiation of replication (183 aa).

The interaction with DNA stretch occupies residues 90–91 (AV).

The protein belongs to the SeqA family. Homodimer. Polymerizes to form helical filaments.

The protein localises to the cytoplasm. Functionally, negative regulator of replication initiation, which contributes to regulation of DNA replication and ensures that replication initiation occurs exactly once per chromosome per cell cycle. Binds to pairs of hemimethylated GATC sequences in the oriC region, thus preventing assembly of replication proteins and re-initiation at newly replicated origins. Repression is relieved when the region becomes fully methylated. The sequence is that of Negative modulator of initiation of replication from Shewanella oneidensis (strain ATCC 700550 / JCM 31522 / CIP 106686 / LMG 19005 / NCIMB 14063 / MR-1).